A 259-amino-acid chain; its full sequence is Eukaryotic translation initiation factor 3 subunit J (259 aa).

Positions 1-70 (MAAAAAAAAG…KEEAEVKPEV (70 aa)) are sufficient for interaction with EIF3B. The interval 1–111 (MAAAAAAAAG…EPEESKVLTP (111 aa)) is disordered. Phosphoserine is present on residues S12, S14, and S21. Acidic residues predominate over residues 41-62 (EGEDEDEDVKDNWDDDDDENKE). Positions 63–107 (EAEVKPEVKISEKKKIAEKIKEKERQQKKRQEEIKKRLEEPEESK) are enriched in basic and acidic residues. The stretch at 71-136 (KISEKKKIAE…ESDLELAKET (66 aa)) forms a coiled coil. K107 participates in a covalent cross-link: Glycyl lysine isopeptide (Lys-Gly) (interchain with G-Cter in SUMO2). Residue T110 is modified to Phosphothreonine. The residue at position 128 (S128) is a Phosphoserine. The interval 218–247 (SKAKKKKKGVVPGGGLKATMKDDLADYGGY) is disordered. Residues 244–259 (YGGYDGGYVQDYEDFM) are promotes stable association with the 40S ribosome. Y255 bears the Phosphotyrosine mark.

Belongs to the eIF-3 subunit J family. As to quaternary structure, component of the eukaryotic translation initiation factor 3 (eIF-3) complex, which is composed of 13 subunits: EIF3A, EIF3B, EIF3C, EIF3D, EIF3E, EIF3F, EIF3G, EIF3H, EIF3I, EIF3J, EIF3K, EIF3L and EIF3M. The eIF-3 complex appears to include 3 stable modules: module A is composed of EIF3A, EIF3B, EIF3G and EIF3I; module B is composed of EIF3F, EIF3H, and EIF3M; and module C is composed of EIF3C, EIF3D, EIF3E, EIF3K and EIF3L. EIF3C of module C binds EIF3B of module A and EIF3H of module B, thereby linking the three modules. EIF3J is a labile subunit that binds to the eIF-3 complex via EIF3B. The eIF-3 complex interacts with RPS6KB1 under conditions of nutrient depletion. Mitogenic stimulation leads to binding and activation of a complex composed of MTOR and RPTOR, leading to phosphorylation and release of RPS6KB1 and binding of EIF4B to eIF-3. Phosphorylated. Phosphorylation is enhanced upon serum stimulation.

The protein localises to the cytoplasm. Component of the eukaryotic translation initiation factor 3 (eIF-3) complex, which is required for several steps in the initiation of protein synthesis. The eIF-3 complex associates with the 40S ribosome and facilitates the recruitment of eIF-1, eIF-1A, eIF-2:GTP:methionyl-tRNAi and eIF-5 to form the 43S pre-initiation complex (43S PIC). The eIF-3 complex stimulates mRNA recruitment to the 43S PIC and scanning of the mRNA for AUG recognition. The eIF-3 complex is also required for disassembly and recycling of post-termination ribosomal complexes and subsequently prevents premature joining of the 40S and 60S ribosomal subunits prior to initiation. The eIF-3 complex specifically targets and initiates translation of a subset of mRNAs involved in cell proliferation, including cell cycling, differentiation and apoptosis, and uses different modes of RNA stem-loop binding to exert either translational activation or repression. This subunit binds directly within the mRNA entry channel of the 40S ribosome to the aminoacyl (A) site. It may regulate the interaction between the 43S PIC and mRNA. In Rattus norvegicus (Rat), this protein is Eukaryotic translation initiation factor 3 subunit J (Eif3j).